The primary structure comprises 1262 residues: Synaptopodin-2 (1262 aa).

The interaction with VPS18 stretch occupies residues 1–174; sequence MGTGDFICIS…PGSQEGHLVE (174 aa). Positions 6 to 88 constitute a PDZ domain; that stretch reads FICISMTGGA…SLHLLIKRPT (83 aa). Polar residues-rich tracts occupy residues 89-105 and 246-260; these read SGTS…TNHQ and TSLT…SSGR. Disordered regions lie at residues 89-114 and 239-276; these read SGTS…GPME and PAPE…TGLP. 3 positions are modified to phosphoserine: Ser304, Ser323, and Ser324. The segment at 323 to 363 is disordered; the sequence is SSEGTEQGEDQRSGKDQGRPHKHRARHARLRRSESLSEKQV. Position 327 is a phosphothreonine (Thr327). A compositionally biased stretch (basic and acidic residues) spans 331-341; sequence EDQRSGKDQGR. The segment covering 342 to 352 has biased composition (basic residues); it reads PHKHRARHARL. A compositionally biased stretch (basic and acidic residues) spans 353 to 363; sequence RRSESLSEKQV. The Nuclear localization signal motif lies at 392 to 400; sequence KKRRRRARK. 3 interaction with ACTN2 regions span residues 477-658, 659-922, and 899-1153; these read MEML…FYDS, SEQI…PPVA, and QSPT…NIEE. 2 disordered regions span residues 503–576 and 592–703; these read AQNE…GPQR and NQTA…SPNP. Phosphoserine is present on residues Ser518, Ser543, Ser544, Ser546, and Ser549. F-actin binding regions lie at residues 530-658 and 659-801; these read TSYQ…FYDS and SEQI…VTAV. Low complexity predominate over residues 540-552; sequence RMQSSVSESSFQM. The interaction with YWHAB stretch occupies residues 554–560; sequence RSLGSVP. Ser558 is subject to Phosphoserine; by PKA. Composition is skewed to polar residues over residues 558-569 and 592-606; these read SVPQQNGFSGVS and NQTA…SVTS. The residue at position 599 (Ser599) is a Phosphoserine. An interaction with YWHAB region spans residues 602-809; sequence QSVTSPIPDF…AVSSIKIAQP (208 aa). Thr605 bears the Phosphothreonine; by PKA and CaMK2 mark. Ser606 bears the Phosphoserine mark. Composition is skewed to pro residues over residues 609–625 and 639–650; these read PDFP…PPPE and AQPPPWPQPAPW. Residues 610–621 are interaction with BAG3; the sequence is DFPAPPPYSAVS. The PPPY motif motif lies at 614-617; that stretch reads PPPY. Tyr617 bears the Phosphotyrosine mark. The residue at position 621 (Ser621) is a Phosphoserine. The segment at 659–914 is F-actin bundling activity; that stretch reads SEQIASRDER…LPASWKYSSN (256 aa). Phosphoserine is present on residues Ser700 and Ser724. 2 disordered regions span residues 741 to 799 and 833 to 868; these read MQSS…PQVT and VVSH…GMSG. Positions 745-898 are actin binding; it reads AKQKTPPPVA…DTVQAHTVRA (154 aa). At Thr749 the chain carries Phosphothreonine. The segment covering 756 to 782 has biased composition (low complexity); the sequence is KPAVKTSSSSQPVAPVSPVWSPGVAPA. A phosphoserine mark is found at Ser772 and Ser776. Polar residues predominate over residues 786–799; that stretch reads AFSTTNPPNPPQVT. The interval 808–1153 is interaction with FLNC; it reads QPTCPPARPA…EAFRPRNIEE (346 aa). Residues Ser900, Ser904, and Ser908 each carry the phosphoserine modification. The disordered stretch occupies residues 933 to 957; it reads LAAIKSQPPGAQASKTSKKKGKKPL. The interval 999–1018 is interaction with ZYX; it reads PAMKQALPPRQADIGSPTNA. A phosphoserine mark is found at Ser1014, Ser1055, and Ser1090.

This sequence belongs to the synaptopodin family. In terms of assembly, may self-associate in muscle cells under oxidative stress. Binds F-actin. Interacts with ACTN2; ACTN2 is proposed to anchor SYOP2 at Z lines in mature myocytes. Interacts with AKAP6, PPP3CA and CAMK2A. Interacts (phosphorylated form) with YWHAB; YWHAB competes with ACTN2 for interaction with SYNPO2. Interacts with KPNA2; mediating nuclear import of SYNOP2; dependent on interaction with YWHAB. Interacts with IPO13; may be implicated in SYNOP2 nuclear import. Interacts with ZYX, FLNC, ILK. Interacts with BAG3 (via WW 1 domain). May associate with the CASA complex consisting of HSPA8, HSPB8 and BAG3. Interacts with VPS18. Post-translationally, phosphorylated by PKA, and by CaMK2 at multiple sites. Dephosphorylated by calcineurin at Ser-558 and Thr-605; abrogating interaction with YWHAB and impairing nuclear import.

Its subcellular location is the nucleus. The protein localises to the cytoplasm. It localises to the cytoskeleton. The protein resides in the myofibril. It is found in the sarcomere. Its subcellular location is the z line. The protein localises to the cell junction. It localises to the focal adhesion. In terms of biological role, has an actin-binding and actin-bundling activity. Can induce the formation of F-actin networks. At the sarcomeric Z lines is proposed to act as adapter protein that links nascent myofibers to the sarcolemma via ZYX and may play a role in early assembly and stabilization of the Z lines. Involved in autophagosome formation. May play a role in chaperone-assisted selective autophagy (CASA) involved in Z lines maintenance in striated muscle under mechanical tension; may link the client-processing CASA chaperone machinery to a membrane-tethering and fusion complex providing autophagosome membranes. Involved in regulation of cell migration. May be a tumor suppressor. In Rattus norvegicus (Rat), this protein is Synaptopodin-2 (Synpo2).